The sequence spans 390 residues: Homoserine O-succinyltransferase (390 aa).

Positions 56-365 (NAVLICHALS…SPHGHDAFLL (310 aa)) constitute an AB hydrolase-1 domain. Serine 162 acts as the Nucleophile in catalysis. Position 232 (arginine 232) interacts with substrate. Catalysis depends on residues aspartate 327 and histidine 360. Aspartate 361 provides a ligand contact to substrate.

The protein belongs to the AB hydrolase superfamily. MetX family. In terms of assembly, homodimer.

Its subcellular location is the cytoplasm. The catalysed reaction is L-homoserine + succinyl-CoA = O-succinyl-L-homoserine + CoA. It participates in amino-acid biosynthesis; L-methionine biosynthesis via de novo pathway; O-succinyl-L-homoserine from L-homoserine: step 1/1. In terms of biological role, transfers a succinyl group from succinyl-CoA to L-homoserine, forming succinyl-L-homoserine. In vitro, also has serine succinyl transferase activity. The protein is Homoserine O-succinyltransferase of Litchfieldella anticariensis (strain DSM 16096 / CECT 5854 / CIP 108499 / LMG 22089 / FP35) (Halomonas anticariensis).